A 329-amino-acid polypeptide reads, in one-letter code: 4-hydroxythreonine-4-phosphate dehydrogenase (329 aa).

Residues histidine 136 and threonine 137 each coordinate substrate. A divalent metal cation contacts are provided by histidine 166, histidine 211, and histidine 266. The substrate site is built by lysine 274, asparagine 283, and arginine 292.

This sequence belongs to the PdxA family. Homodimer. The cofactor is Zn(2+). It depends on Mg(2+) as a cofactor. Co(2+) serves as cofactor.

It localises to the cytoplasm. The catalysed reaction is 4-(phosphooxy)-L-threonine + NAD(+) = 3-amino-2-oxopropyl phosphate + CO2 + NADH. It functions in the pathway cofactor biosynthesis; pyridoxine 5'-phosphate biosynthesis; pyridoxine 5'-phosphate from D-erythrose 4-phosphate: step 4/5. Its function is as follows. Catalyzes the NAD(P)-dependent oxidation of 4-(phosphooxy)-L-threonine (HTP) into 2-amino-3-oxo-4-(phosphooxy)butyric acid which spontaneously decarboxylates to form 3-amino-2-oxopropyl phosphate (AHAP). The protein is 4-hydroxythreonine-4-phosphate dehydrogenase of Escherichia coli (strain SE11).